Here is a 447-residue protein sequence, read N- to C-terminus: Glutamate--tRNA ligase 1 (447 aa).

Residues Pro10–Asn20 carry the 'HIGH' region motif. Residues Lys240–Arg244 carry the 'KMSKS' region motif. Lys243 lines the ATP pocket.

It belongs to the class-I aminoacyl-tRNA synthetase family. Glutamate--tRNA ligase type 1 subfamily. Monomer.

The protein localises to the cytoplasm. The enzyme catalyses tRNA(Glu) + L-glutamate + ATP = L-glutamyl-tRNA(Glu) + AMP + diphosphate. Its function is as follows. Catalyzes the attachment of glutamate to tRNA(Glu) in a two-step reaction: glutamate is first activated by ATP to form Glu-AMP and then transferred to the acceptor end of tRNA(Glu). This chain is Glutamate--tRNA ligase 1, found in Rickettsia felis (strain ATCC VR-1525 / URRWXCal2) (Rickettsia azadi).